The sequence spans 125 residues: uncharacterized protein (125 aa).

The region spanning 45-110 (IVPVGSKTLL…IGNVPLKILC (66 aa)) is the Cupin type-2 domain.

This is an uncharacterized protein from Methanocaldococcus jannaschii (strain ATCC 43067 / DSM 2661 / JAL-1 / JCM 10045 / NBRC 100440) (Methanococcus jannaschii).